The sequence spans 223 residues: Deoxyribose-phosphate aldolase (223 aa).

Asp89 functions as the Proton donor/acceptor in the catalytic mechanism. The active-site Schiff-base intermediate with acetaldehyde is Lys152. Lys181 serves as the catalytic Proton donor/acceptor.

This sequence belongs to the DeoC/FbaB aldolase family. DeoC type 1 subfamily.

Its subcellular location is the cytoplasm. The enzyme catalyses 2-deoxy-D-ribose 5-phosphate = D-glyceraldehyde 3-phosphate + acetaldehyde. The protein operates within carbohydrate degradation; 2-deoxy-D-ribose 1-phosphate degradation; D-glyceraldehyde 3-phosphate and acetaldehyde from 2-deoxy-alpha-D-ribose 1-phosphate: step 2/2. Its function is as follows. Catalyzes a reversible aldol reaction between acetaldehyde and D-glyceraldehyde 3-phosphate to generate 2-deoxy-D-ribose 5-phosphate. The chain is Deoxyribose-phosphate aldolase from Listeria monocytogenes serotype 4b (strain F2365).